Here is a 174-residue protein sequence, read N- to C-terminus: uncharacterized protein (174 aa).

A run of 2 helical transmembrane segments spans residues 8-28 (FLFIVVFLFHGFMFSVVNYVF) and 146-166 (IVSWILYVFLLATLFLSIQFI).

It is found in the cell membrane. This is an uncharacterized protein from Haemophilus influenzae (strain ATCC 51907 / DSM 11121 / KW20 / Rd).